Reading from the N-terminus, the 223-residue chain is Octanoyltransferase (223 aa).

Positions 32 to 207 constitute a BPL/LPL catalytic domain; it reads DETPDEIWLV…HFAHHLAITD (176 aa). Residues 71-78, 138-140, and 151-153 contribute to the substrate site; these read RGGQVTYH, SLG, and GLA. The Acyl-thioester intermediate role is filled by Cys-169.

This sequence belongs to the LipB family.

It localises to the cytoplasm. It carries out the reaction octanoyl-[ACP] + L-lysyl-[protein] = N(6)-octanoyl-L-lysyl-[protein] + holo-[ACP] + H(+). The protein operates within protein modification; protein lipoylation via endogenous pathway; protein N(6)-(lipoyl)lysine from octanoyl-[acyl-carrier-protein]: step 1/2. In terms of biological role, catalyzes the transfer of endogenously produced octanoic acid from octanoyl-acyl-carrier-protein onto the lipoyl domains of lipoate-dependent enzymes. Lipoyl-ACP can also act as a substrate although octanoyl-ACP is likely to be the physiological substrate. The sequence is that of Octanoyltransferase from Erwinia tasmaniensis (strain DSM 17950 / CFBP 7177 / CIP 109463 / NCPPB 4357 / Et1/99).